Reading from the N-terminus, the 514-residue chain is 2,3-bisphosphoglycerate-independent phosphoglycerate mutase (514 aa).

Residues aspartate 14 and serine 64 each contribute to the Mn(2+) site. Serine 64 acts as the Phosphoserine intermediate in catalysis. Residues histidine 125, arginine 155–aspartate 156, arginine 187, arginine 193, arginine 263–arginine 266, and lysine 336 each bind substrate. Mn(2+) is bound by residues aspartate 403, histidine 407, aspartate 444, histidine 445, and histidine 463.

The protein belongs to the BPG-independent phosphoglycerate mutase family. In terms of assembly, monomer. Mn(2+) is required as a cofactor.

The enzyme catalyses (2R)-2-phosphoglycerate = (2R)-3-phosphoglycerate. It participates in carbohydrate degradation; glycolysis; pyruvate from D-glyceraldehyde 3-phosphate: step 3/5. In terms of biological role, catalyzes the interconversion of 2-phosphoglycerate and 3-phosphoglycerate. The sequence is that of 2,3-bisphosphoglycerate-independent phosphoglycerate mutase from Salmonella choleraesuis (strain SC-B67).